Consider the following 180-residue polypeptide: Large ribosomal subunit protein uL5c (180 aa).

Belongs to the universal ribosomal protein uL5 family. In terms of assembly, part of the 50S ribosomal subunit; contacts the 5S rRNA.

Its subcellular location is the plastid. The protein localises to the chloroplast. Binds 5S rRNA, forms part of the central protuberance of the 50S subunit. The protein is Large ribosomal subunit protein uL5c (rpl5) of Chlorella vulgaris (Green alga).